The primary structure comprises 278 residues: Large ribosomal subunit protein uL2 (278 aa).

Disordered stretches follow at residues 1-58 and 224-278; these read MAIR…GGGH and VVMN…GKKR. The segment covering 23 to 33 has biased composition (basic and acidic residues); the sequence is EITRDHPEKSL. Basic residues predominate over residues 37-58; that stretch reads LHGRGGRNAHGRITTRHKGGGH. Over residues 253–268 the composition is skewed to basic and acidic residues; the sequence is PEGRTRKPKKASDKLI. A compositionally biased stretch (basic residues) spans 269–278; the sequence is VRRRRTGKKR.

Belongs to the universal ribosomal protein uL2 family. As to quaternary structure, part of the 50S ribosomal subunit. Forms a bridge to the 30S subunit in the 70S ribosome.

One of the primary rRNA binding proteins. Required for association of the 30S and 50S subunits to form the 70S ribosome, for tRNA binding and peptide bond formation. It has been suggested to have peptidyltransferase activity; this is somewhat controversial. Makes several contacts with the 16S rRNA in the 70S ribosome. The chain is Large ribosomal subunit protein uL2 from Mycolicibacterium vanbaalenii (strain DSM 7251 / JCM 13017 / BCRC 16820 / KCTC 9966 / NRRL B-24157 / PYR-1) (Mycobacterium vanbaalenii).